The sequence spans 676 residues: Methionine--tRNA ligase (676 aa).

The 'HIGH' region motif lies at Pro-15–His-25. Residues Cys-146, Cys-149, Cys-159, and Cys-162 each contribute to the Zn(2+) site. Positions Lys-332–Ser-336 match the 'KMSKS' region motif. Lys-335 is a binding site for ATP. The region spanning Asp-575–Lys-676 is the tRNA-binding domain.

The protein belongs to the class-I aminoacyl-tRNA synthetase family. MetG type 1 subfamily. Homodimer. Requires Zn(2+) as cofactor.

It localises to the cytoplasm. It carries out the reaction tRNA(Met) + L-methionine + ATP = L-methionyl-tRNA(Met) + AMP + diphosphate. Its function is as follows. Is required not only for elongation of protein synthesis but also for the initiation of all mRNA translation through initiator tRNA(fMet) aminoacylation. The polypeptide is Methionine--tRNA ligase (Shewanella sp. (strain MR-7)).